The following is a 114-amino-acid chain: Protein ELF4-LIKE 4 (114 aa).

A disordered region spans residues 87–114 (SVDASSEGESSGTLKSDGKANQKRFRSG). Residues 89 to 100 (DASSEGESSGTL) are compositionally biased toward polar residues.

This sequence belongs to the EARLY FLOWERING 4 family. As to quaternary structure, homodimer.

The protein localises to the nucleus. Its function is as follows. Component of the central CCA1/LHY-TOC1 feedback loop in the circadian clock that promotes clock accuracy and is required for sustained rhythms in the absence of daily light/dark cycles. The polypeptide is Protein ELF4-LIKE 4 (EFL4) (Arabidopsis thaliana (Mouse-ear cress)).